The sequence spans 124 residues: Multifunctional methyltransferase subunit TRM112 homolog B (124 aa).

The TRM112 domain maps to 2 to 120 (RLIVHNMLSC…SKGIPNMLLH (119 aa)).

The protein belongs to the TRM112 family. Interacts with TRM9. Expressed in anthers.

Its function is as follows. Acts as an activator of both rRNA/tRNA and protein methyltransferases. Required for TRM9 tRNA methyltransferase activity. In Arabidopsis thaliana (Mouse-ear cress), this protein is Multifunctional methyltransferase subunit TRM112 homolog B.